Reading from the N-terminus, the 417-residue chain is MQMYFYNLVKDTDPEIAEAIKNELKRQQNKIELIASENFVSIAVMAAMGSPLTNKYAEGYPNKRYYGGCEYIDVVESIAIERAKKLFGAEHANVQPHSGAQANMAVYFAVLNPGDTILGMNLSHGGHLTHGSPVNFSGKLYNIVSYGVDPETETIDYDEVLRLAKEHRPKLILAGASAYPRIIDFKKFREIADEVGAYLMVDMAHIAGLVAAGLHPSPVEYADFVTTTTHKTLRGPRGGLILCKEKYAKLIDKSIFPGIQGGPLEHVIAAKAVALKEAMTEEFRNYQIQILKNAKALSERLIERGFRLVSGGTDNHLMLVDLRNKGITGKDAEKRLDSLNITCNKNAIPFDTQSPMVTSGIRLGTPAVTTRGFKEEDMIEVADIIHDALTNSDTDDNILQRVKALCEKYPLYSEFRE.

(6S)-5,6,7,8-tetrahydrofolate contacts are provided by residues L122 and 126-128 (GHL). K231 carries the N6-(pyridoxal phosphate)lysine modification.

Belongs to the SHMT family. As to quaternary structure, homodimer. Pyridoxal 5'-phosphate is required as a cofactor.

Its subcellular location is the cytoplasm. It carries out the reaction (6R)-5,10-methylene-5,6,7,8-tetrahydrofolate + glycine + H2O = (6S)-5,6,7,8-tetrahydrofolate + L-serine. Its pathway is one-carbon metabolism; tetrahydrofolate interconversion. It participates in amino-acid biosynthesis; glycine biosynthesis; glycine from L-serine: step 1/1. In terms of biological role, catalyzes the reversible interconversion of serine and glycine with tetrahydrofolate (THF) serving as the one-carbon carrier. This reaction serves as the major source of one-carbon groups required for the biosynthesis of purines, thymidylate, methionine, and other important biomolecules. Also exhibits THF-independent aldolase activity toward beta-hydroxyamino acids, producing glycine and aldehydes, via a retro-aldol mechanism. This is Serine hydroxymethyltransferase from Caldicellulosiruptor saccharolyticus (strain ATCC 43494 / DSM 8903 / Tp8T 6331).